Consider the following 2359-residue polypeptide: Pre-mRNA-processing-splicing factor 8A (2359 aa).

The tract at residues 1–54 is disordered; that stretch reads MWNNNDGMPLAPPGTGGSMMPPPPAAHPSYTALPPPSNPTPPVEPTPEEAEAKL. The span at 33–45 shows a compositional bias: pro residues; that stretch reads LPPPSNPTPPVEP. Residues 2127-2258 form the MPN domain; sequence TYIMPKNILK…LTSYKLTQTG (132 aa).

In terms of assembly, interacts with CLO.

It is found in the nucleus. Functionally, functions as a scaffold that mediates the ordered assembly of spliceosomal proteins and snRNAs. Required for the assembly of the U4/U6-U5 tri-snRNP complex. Required for embryo development. Required for splicing efficiency of COOLAIR introns and usage of the proximal poly(A) site. COOLAIR is a set of long non-coding antisense transcripts produced at the FLOWERING LOCUS C (FLC). COOLAIR initiates just downstream of the major sense transcript poly(A) site and terminates either early or extends into the FLC promoter region. Splicing of COOLAIR by PRP8A is functionally important for FLC regulation. This Arabidopsis thaliana (Mouse-ear cress) protein is Pre-mRNA-processing-splicing factor 8A.